A 691-amino-acid polypeptide reads, in one-letter code: Elongation factor G (691 aa).

In terms of domain architecture, tr-type G spans glutamate 8 to isoleucine 282. GTP is bound by residues alanine 17–threonine 24, aspartate 81–histidine 85, and asparagine 135–aspartate 138.

This sequence belongs to the TRAFAC class translation factor GTPase superfamily. Classic translation factor GTPase family. EF-G/EF-2 subfamily.

The protein resides in the cytoplasm. In terms of biological role, catalyzes the GTP-dependent ribosomal translocation step during translation elongation. During this step, the ribosome changes from the pre-translocational (PRE) to the post-translocational (POST) state as the newly formed A-site-bound peptidyl-tRNA and P-site-bound deacylated tRNA move to the P and E sites, respectively. Catalyzes the coordinated movement of the two tRNA molecules, the mRNA and conformational changes in the ribosome. This is Elongation factor G from Thermosynechococcus vestitus (strain NIES-2133 / IAM M-273 / BP-1).